A 299-amino-acid chain; its full sequence is tRNA uridine(34) hydroxylase (299 aa).

The Rhodanese domain maps to 132–226 (AGRPVVMLDT…YFEEVGGAHY (95 aa)). The active-site Cysteine persulfide intermediate is the C186.

The protein belongs to the TrhO family.

The enzyme catalyses uridine(34) in tRNA + AH2 + O2 = 5-hydroxyuridine(34) in tRNA + A + H2O. Functionally, catalyzes oxygen-dependent 5-hydroxyuridine (ho5U) modification at position 34 in tRNAs. The sequence is that of tRNA uridine(34) hydroxylase from Burkholderia mallei (strain NCTC 10247).